Here is a 156-residue protein sequence, read N- to C-terminus: ATP synthase subunit b (156 aa).

Residues 7–27 (LFAQMVVFLILAWFTMKFVWP) form a helical membrane-spanning segment.

Belongs to the ATPase B chain family. F-type ATPases have 2 components, F(1) - the catalytic core - and F(0) - the membrane proton channel. F(1) has five subunits: alpha(3), beta(3), gamma(1), delta(1), epsilon(1). F(0) has three main subunits: a(1), b(2) and c(10-14). The alpha and beta chains form an alternating ring which encloses part of the gamma chain. F(1) is attached to F(0) by a central stalk formed by the gamma and epsilon chains, while a peripheral stalk is formed by the delta and b chains.

The protein localises to the cell inner membrane. Its function is as follows. F(1)F(0) ATP synthase produces ATP from ADP in the presence of a proton or sodium gradient. F-type ATPases consist of two structural domains, F(1) containing the extramembraneous catalytic core and F(0) containing the membrane proton channel, linked together by a central stalk and a peripheral stalk. During catalysis, ATP synthesis in the catalytic domain of F(1) is coupled via a rotary mechanism of the central stalk subunits to proton translocation. Functionally, component of the F(0) channel, it forms part of the peripheral stalk, linking F(1) to F(0). The chain is ATP synthase subunit b from Paraburkholderia phymatum (strain DSM 17167 / CIP 108236 / LMG 21445 / STM815) (Burkholderia phymatum).